A 1235-amino-acid chain; its full sequence is High-affinity potassium transport protein (1235 aa).

At Ser-15 the chain carries Phosphoserine. Helical transmembrane passes span 49–70 (SFIAVHYFYTISLTLITSILLY) and 78–98 (IDTLFLAAGAVTQGGLNTVDI). The N-linked (GlcNAc...) asparagine glycan is linked to Asn-100. Residues 107 to 127 (IVLYIVCCISTPIAVHSCLAF) traverse the membrane as a helical segment. 4 disordered regions span residues 161–310 (LTAR…SPAD), 323–344 (EATAEDEGPPLVIGSPADGTRY), 361–441 (KIKI…TKPP), and 488–565 (RLST…HQLQ). Positions 164–179 (RTMTKNRTGTQRTSYP) are enriched in polar residues. Asn-169 is a glycosylation site (N-linked (GlcNAc...) asparagine). Over residues 198-217 (VNRDEQDSVHSDQNSHDISR) the composition is skewed to basic and acidic residues. The segment covering 219 to 232 (SSNNNTNHNGSSGS) has biased composition (low complexity). Asn-222 and Asn-227 each carry an N-linked (GlcNAc...) asparagine glycan. Acidic residues predominate over residues 237-247 (VKEDETDDNGE). The segment covering 248-274 (YQENNSYSTVGSSSNTVADESLNQKPK) has biased composition (polar residues). N-linked (GlcNAc...) asparagine glycosylation is present at Asn-251. Asn-369 and Asn-383 each carry an N-linked (GlcNAc...) asparagine glycan. Composition is skewed to polar residues over residues 370 to 415 (ESNT…SNSG) and 490 to 502 (STGSIEKNSSNNV). At Ser-414 the chain carries Phosphoserine. Asn-497, Asn-501, and Asn-532 each carry an N-linked (GlcNAc...) asparagine glycan. Residues 510-539 (DMDDDDDDDDNDGDNNEEYFADNESGDEDE) are compositionally biased toward acidic residues. Ser-534 is modified (phosphoserine). The span at 540–563 (RVQQSEPHSDSELKSHQQQQEKHQ) shows a compositional bias: basic and acidic residues. N-linked (GlcNAc...) asparagine glycosylation is found at Asn-580 and Asn-677. Positions 671-706 (HDGSHKNGSEEASSDSNENIYSTNGGSDHNGLNNYP) are disordered. Polar residues predominate over residues 680 to 706 (EEASSDSNENIYSTNGGSDHNGLNNYP). The next 5 membrane-spanning stretches (helical) occupy residues 778–800 (ILVVYYVGWHIVAFVMLVPWIIL), 813–834 (VSPTWWGFWTAMSAFNDLGLTL), 838–858 (SMMSFNKAVYPLIVMIWFIII), 862–882 (GFPILLRCIIWIMFKISPDLS), and 898–918 (CFTLLFPKAATWWLLLTLAGL). N-linked (GlcNAc...) asparagine glycosylation is present at Asn-919. Helical transmembrane passes span 923–943 (WILFIILDFGSTVVKSLSKGY) and 971–991 (SIQVSYMLMMYVSVLPLAISI). Residues 1003–1063 (GLYGDMGGEP…KKKKKTENPN (61 aa)) are disordered. A compositionally biased stretch (acidic residues) spans 1010-1031 (GEPEDTDTEDDGNDEDDDEENE). N-linked (GlcNAc...) asparagine glycosylation occurs at Asn-1030. Residues 1036–1049 (QSSQRSSSNNNNNN) are compositionally biased toward low complexity. Helical transmembrane passes span 1078-1098 (QLSFDLWFLFLGLFIICICEG) and 1111-1131 (IFAILFEIVSAYGTVGLSLGY). A glycan (N-linked (GlcNAc...) asparagine) is linked at Asn-1135.

The protein belongs to the TrkH potassium transport family.

The protein localises to the membrane. Functionally, this protein is required for high-affinity potassium transport. The chain is High-affinity potassium transport protein (TRK1) from Saccharomyces cerevisiae (strain ATCC 204508 / S288c) (Baker's yeast).